The primary structure comprises 81 residues: Small ribosomal subunit protein uS17 (81 aa).

Belongs to the universal ribosomal protein uS17 family. Part of the 30S ribosomal subunit.

Functionally, one of the primary rRNA binding proteins, it binds specifically to the 5'-end of 16S ribosomal RNA. The chain is Small ribosomal subunit protein uS17 from Methylocella silvestris (strain DSM 15510 / CIP 108128 / LMG 27833 / NCIMB 13906 / BL2).